Consider the following 1221-residue polypeptide: Fibulin-2 (1221 aa).

The N-terminal stretch at 1-26 (MLLQESAGVWLALALVTALTPSPSMA) is a signal peptide. The tract at residues 27-176 (VPWQDCTGAE…ELICYQLPGC (150 aa)) is subdomain NA (Cys-rich). Positions 27–434 (VPWQDCTGAE…DGSTKDLIET (408 aa)) are n. Positions 177 to 434 (HGNFSDAEEG…DGSTKDLIET (258 aa)) are subdomain NB (Cys-free). N-linked (GlcNAc...) asparagine glycosylation is present at Asn-179. 2 disordered regions span residues 248–329 (PTAA…LIPD) and 341–399 (GAAP…PQHP). Residues 270–283 (DTEEDEEEEEEETL) are compositionally biased toward acidic residues. A compositionally biased stretch (basic and acidic residues) spans 312-322 (QEKEAEAKAGP). Positions 421-423 (RGD) match the Cell attachment site motif. 11 disulfides stabilise this stretch: Cys-435–Cys-462, Cys-436–Cys-469, Cys-449–Cys-470, Cys-479–Cys-508, Cys-492–Cys-509, Cys-511–Cys-535, Cys-512–Cys-542, Cys-525–Cys-543, Cys-598–Cys-610, Cys-606–Cys-619, and Cys-621–Cys-634. Anaphylatoxin-like domains follow at residues 435–477 (CCAA…LKEK), 478–510 (SCVA…QCCD), and 511–543 (CCGL…LSCC). Residue Asn-497 is glycosylated (N-linked (GlcNAc...) asparagine). The 42-residue stretch at 594-635 (DQDECLMLPGELCQHLCINTVGSYRCACFPGFELQGDGRTCR) folds into the EGF-like 1; calcium-binding domain. A disordered region spans residues 633-661 (TCRPDRGAPQLDTARESAPRSESAQVSPN). Over residues 652–661 (RSESAQVSPN) the composition is skewed to polar residues. The region spanning 669-708 (QPNTCKDNGPCRQVCRVVGDTAMCSCFPGYAIMADGVSCE) is the EGF-like 2 domain. Disulfide bonds link Cys-673–Cys-683, Cys-679–Cys-692, Cys-694–Cys-707, Cys-713–Cys-726, and Cys-720–Cys-735. Residues 709-755 (DQDECLMGTHDCSWKQFCVNTLGSFYCVNHTVLCAEGYILNAHRKCV) enclose the EGF-like 3; calcium-binding domain. N-linked (GlcNAc...) asparagine glycosylation occurs at Asn-737. Cys-742 and Cys-754 are joined by a disulfide. The region spanning 756 to 800 (DINECVTDLHTCTRAEHCVNTPGSFQCYKALTCEPGYVLTDGECT) is the EGF-like 4; calcium-binding domain. The EGF-like 5; calcium-binding domain maps to 801 to 846 (DVDECVTGTHNCQAGFSCQNTKGSFYCQARQRCMDGFLQDPEGNCV). Disulfide bonds link Cys-805–Cys-818, Cys-812–Cys-827, and Cys-833–Cys-845. Residues 847 to 894 (DINECTSLLEPCRSGFSCINTVGSYTCQRNPLVCGRGYHANEEGSECV) enclose the EGF-like 6; calcium-binding domain. The 43-residue stretch at 895–937 (DVNECETGVHRCGEGQLCYNLPGSYRCDCKPGFQRDAFGRTCI) folds into the EGF-like 7; calcium-binding domain. 15 cysteine pairs are disulfide-bonded: Cys-899–Cys-912, Cys-906–Cys-921, Cys-923–Cys-936, Cys-942–Cys-954, Cys-950–Cys-963, Cys-965–Cys-978, Cys-984–Cys-993, Cys-989–Cys-1002, Cys-1004–Cys-1017, Cys-1023–Cys-1035, Cys-1031–Cys-1044, Cys-1046–Cys-1060, Cys-1066–Cys-1079, Cys-1073–Cys-1088, and Cys-1093–Cys-1105. The region spanning 938–979 (DVNECWVSPGRLCQHTCENTPGSYRCSCAAGFLLAADGKHCE) is the EGF-like 8; calcium-binding domain. The 39-residue stretch at 980–1018 (DVNECETRRCSQECANIYGSYQCYCRQGYQLAEDGHTCT) folds into the EGF-like 9; calcium-binding domain. Residues 1019 to 1061 (DIDECAQGAGILCTFRCVNVPGSYQCACPEQGYTMMANGRSCK) form the EGF-like 10; calcium-binding domain. One can recognise an EGF-like 11; calcium-binding domain in the interval 1062-1106 (DLDECALGTHNCSEAETCHNIQGSFRCLRFDCPPNYVRVSETKCE). A glycan (N-linked (GlcNAc...) asparagine) is linked at Asn-1072. The domain III stretch occupies residues 1111-1221 (QDITECQTSP…MYIFFTTFAP (111 aa)).

Belongs to the fibulin family. As to quaternary structure, homotrimer; disulfide-linked. Interacts with LAMA2. Interacts with FBN1 (via N-terminal domain). Forms a ternary complex with ELN and FBN1. In terms of tissue distribution, component of both basement membranes and other connective tissues.

The protein resides in the secreted. The protein localises to the extracellular space. It is found in the extracellular matrix. In terms of biological role, its binding to fibronectin and some other ligands is calcium dependent. May act as an adapter that mediates the interaction between FBN1 and ELN. The sequence is that of Fibulin-2 (Fbln2) from Mus musculus (Mouse).